A 341-amino-acid chain; its full sequence is Glycerol-3-phosphate dehydrogenase [NAD(P)+] (341 aa).

NADPH-binding residues include serine 15, tryptophan 16, arginine 36, and lysine 110. Sn-glycerol 3-phosphate contacts are provided by lysine 110, glycine 139, and serine 141. Alanine 143 contributes to the NADPH binding site. Sn-glycerol 3-phosphate-binding residues include lysine 194, aspartate 247, serine 257, arginine 258, and asparagine 259. Lysine 194 acts as the Proton acceptor in catalysis. Arginine 258 contributes to the NADPH binding site. NADPH contacts are provided by valine 282 and glutamate 284.

This sequence belongs to the NAD-dependent glycerol-3-phosphate dehydrogenase family.

It is found in the cytoplasm. The catalysed reaction is sn-glycerol 3-phosphate + NAD(+) = dihydroxyacetone phosphate + NADH + H(+). It catalyses the reaction sn-glycerol 3-phosphate + NADP(+) = dihydroxyacetone phosphate + NADPH + H(+). It functions in the pathway membrane lipid metabolism; glycerophospholipid metabolism. In terms of biological role, catalyzes the reduction of the glycolytic intermediate dihydroxyacetone phosphate (DHAP) to sn-glycerol 3-phosphate (G3P), the key precursor for phospholipid synthesis. The chain is Glycerol-3-phosphate dehydrogenase [NAD(P)+] from Xanthomonas euvesicatoria pv. vesicatoria (strain 85-10) (Xanthomonas campestris pv. vesicatoria).